The primary structure comprises 134 residues: ATP synthase epsilon chain (134 aa).

This sequence belongs to the ATPase epsilon chain family. As to quaternary structure, F-type ATPases have 2 components, CF(1) - the catalytic core - and CF(0) - the membrane proton channel. CF(1) has five subunits: alpha(3), beta(3), gamma(1), delta(1), epsilon(1). CF(0) has three main subunits: a, b and c.

It localises to the cell inner membrane. Produces ATP from ADP in the presence of a proton gradient across the membrane. This Sinorhizobium medicae (strain WSM419) (Ensifer medicae) protein is ATP synthase epsilon chain.